Here is a 356-residue protein sequence, read N- to C-terminus: Thrombopoietin (356 aa).

Residues Met1–Ser21 form the signal peptide. Disulfide bonds link Cys28/Cys172 and Cys50/Cys106. N-linked (GlcNAc...) asparagine glycans are attached at residues Asn197, Asn206, Asn235, Asn249, Asn256, Asn336, and Asn351. The tract at residues Gly291–Thr356 is disordered. Positions Pro330–Ala339 are enriched in polar residues.

Belongs to the EPO/TPO family. Found mainly in the liver, kidney and skeletal muscle.

It localises to the secreted. Lineage-specific cytokine affecting the proliferation and maturation of megakaryocytes from their committed progenitor cells. It acts at a late stage of megakaryocyte development. It may be the major physiological regulator of circulating platelets. This Mus musculus (Mouse) protein is Thrombopoietin (Thpo).